A 230-amino-acid chain; its full sequence is Large ribosomal subunit protein uL1 (230 aa).

It belongs to the universal ribosomal protein uL1 family. Part of the 50S ribosomal subunit.

In terms of biological role, binds directly to 23S rRNA. The L1 stalk is quite mobile in the ribosome, and is involved in E site tRNA release. Functionally, protein L1 is also a translational repressor protein, it controls the translation of the L11 operon by binding to its mRNA. This chain is Large ribosomal subunit protein uL1, found in Desulforapulum autotrophicum (strain ATCC 43914 / DSM 3382 / VKM B-1955 / HRM2) (Desulfobacterium autotrophicum).